Here is a 157-residue protein sequence, read N- to C-terminus: Cyclic pyranopterin monophosphate synthase (157 aa).

Substrate is bound by residues 73-75 (LCH) and 110-111 (ME). D125 is a catalytic residue.

Belongs to the MoaC family. As to quaternary structure, homohexamer; trimer of dimers.

The catalysed reaction is (8S)-3',8-cyclo-7,8-dihydroguanosine 5'-triphosphate = cyclic pyranopterin phosphate + diphosphate. It functions in the pathway cofactor biosynthesis; molybdopterin biosynthesis. In terms of biological role, catalyzes the conversion of (8S)-3',8-cyclo-7,8-dihydroguanosine 5'-triphosphate to cyclic pyranopterin monophosphate (cPMP). This chain is Cyclic pyranopterin monophosphate synthase, found in Pseudomonas fluorescens (strain SBW25).